A 212-amino-acid polypeptide reads, in one-letter code: HTH-type transcriptional regulator RutR (212 aa).

In terms of domain architecture, HTH tetR-type spans Ser-17–Trp-77. Positions Thr-39 to Tyr-58 form a DNA-binding region, H-T-H motif.

In terms of assembly, homodimer.

Its function is as follows. Master transcription regulator which represses the degradation of pyrimidines (rutABCDEFG) and purines (gcl operon) for maintenance of metabolic balance between pyrimidines and purines. It also regulates the synthesis of pyrimidine nucleotides and arginine from glutamine (carAB) and the supply of glutamate (gadABWX). This is HTH-type transcriptional regulator RutR (rutR) from Escherichia coli O6:H1 (strain CFT073 / ATCC 700928 / UPEC).